The chain runs to 673 residues: DNA ligase (673 aa).

Residues 33 to 37 (DSVYD), 82 to 83 (SL), and glutamate 117 each bind NAD(+). Lysine 119 serves as the catalytic N6-AMP-lysine intermediate. Positions 140, 177, 295, and 319 each coordinate NAD(+). Zn(2+)-binding residues include cysteine 413, cysteine 416, cysteine 431, and cysteine 436. A BRCT domain is found at 595 to 673 (AVSQVLAGKK…EAELLALDPK (79 aa)).

This sequence belongs to the NAD-dependent DNA ligase family. LigA subfamily. Requires Mg(2+) as cofactor. Mn(2+) serves as cofactor.

The catalysed reaction is NAD(+) + (deoxyribonucleotide)n-3'-hydroxyl + 5'-phospho-(deoxyribonucleotide)m = (deoxyribonucleotide)n+m + AMP + beta-nicotinamide D-nucleotide.. In terms of biological role, DNA ligase that catalyzes the formation of phosphodiester linkages between 5'-phosphoryl and 3'-hydroxyl groups in double-stranded DNA using NAD as a coenzyme and as the energy source for the reaction. It is essential for DNA replication and repair of damaged DNA. The chain is DNA ligase from Synechococcus sp. (strain JA-3-3Ab) (Cyanobacteria bacterium Yellowstone A-Prime).